A 418-amino-acid chain; its full sequence is DnaJ protein homolog 2 (418 aa).

The J domain maps to 11–76 (NTKYYEVLGV…REIYDQYGEE (66 aa)). Residues 135-219 (GTSKKLSLSR…CKGEKVVQQK (85 aa)) form a CR-type zinc finger. 4 CXXCXGXG motif repeats span residues 148-155 (CTKCKGKG), 164-171 (CASCQGSG), 191-198 (CNECKGTG), and 207-214 (CPQCKGEK). Residues 382–418 (VNIEEEMRRKQHQQAQEAYDEDDEGHGGAQRVQCAQQ) are disordered. Cys415 is subject to Cysteine methyl ester. Cys415 is lipidated: S-farnesyl cysteine. Positions 416-418 (AQQ) are cleaved as a propeptide — removed in mature form.

The protein localises to the membrane. In terms of biological role, plays a continuous role in plant development probably in the structural organization of compartments. This chain is DnaJ protein homolog 2 (LDJ2), found in Allium porrum (Leek).